The sequence spans 92 residues: Small ribosomal subunit protein uS19 (92 aa).

Belongs to the universal ribosomal protein uS19 family.

In terms of biological role, protein S19 forms a complex with S13 that binds strongly to the 16S ribosomal RNA. The protein is Small ribosomal subunit protein uS19 of Vibrio parahaemolyticus serotype O3:K6 (strain RIMD 2210633).